The primary structure comprises 371 residues: Archaeal glycosylation protein Q (371 aa).

The interval 19 to 39 (QRSDGSMPAGHNGPYHDPETP) is disordered.

The protein resides in the cytoplasm. It participates in cell surface structure biogenesis; S-layer biogenesis. Its function is as follows. Putative isomerase involved in the N-glycosylation pathway. Required for the appearance of the methyl ester of hexuronic acid found at position four of the pentasaccharide N-linked to the S-layer glycoprotein. Either involved in preparing the third sugar for attachment of the fourth pentasaccharide subunit or processing the fourth sugar prior to its addition to the lipid-linked trisaccharide. This Haloferax volcanii (strain ATCC 29605 / DSM 3757 / JCM 8879 / NBRC 14742 / NCIMB 2012 / VKM B-1768 / DS2) (Halobacterium volcanii) protein is Archaeal glycosylation protein Q (aglQ).